We begin with the raw amino-acid sequence, 279 residues long: Pleckstrin homology domain-containing family F member 1 (279 aa).

The region spanning 35-131 (VLLGEGVLTK…WISHIEECVR (97 aa)) is the PH domain. Residues 152 to 212 (DKATDICMRC…VCSLCYRELA (61 aa)) form an FYVE-type zinc finger. 8 residues coordinate Zn(2+): Cys158, Cys161, Cys175, Cys178, Cys183, Cys186, Cys204, and Cys207. Residues 219–264 (EAKERFRGSPGQLTHLGSTMCGASSGDDDDSDEDREGSGDGDWPTQ) are disordered. Positions 244-253 (GDDDDSDEDR) are enriched in acidic residues.

It is found in the nucleus. The protein resides in the cytoplasm. It localises to the perinuclear region. Its subcellular location is the lysosome. Functionally, may induce apoptosis through the lysosomal-mitochondrial pathway. Translocates to the lysosome initiating the permeabilization of lysosomal membrane (LMP) and resulting in the release of CTSD and CTSL to the cytoplasm. Triggers the caspase-independent apoptosis by altering mitochondrial membrane permeabilization (MMP) resulting in the release of PDCD8. The protein is Pleckstrin homology domain-containing family F member 1 (Plekhf1) of Rattus norvegicus (Rat).